We begin with the raw amino-acid sequence, 522 residues long: Terpineol synthase, chloroplastic (522 aa).

(2E)-geranyl diphosphate-binding residues include Arg-242, Asp-279, Asp-283, Arg-414, and Asn-417. Mg(2+) is bound by residues Asp-279 and Asp-283. The DDXXD motif signature appears at 279 to 283 (DDVYD). Mg(2+)-binding residues include Asn-417, Thr-421, and Glu-425.

Belongs to the terpene synthase family. Tpsb subfamily. As to quaternary structure, monomer. It depends on Mg(2+) as a cofactor. Mn(2+) is required as a cofactor. As to expression, confined to flowers.

It localises to the plastid. It is found in the chloroplast. It catalyses the reaction (2E)-geranyl diphosphate + H2O = (S)-alpha-terpineol + diphosphate. It carries out the reaction (2E)-geranyl diphosphate = sabinene + diphosphate. The catalysed reaction is (2E)-geranyl diphosphate = beta-myrcene + diphosphate. The enzyme catalyses (2E)-geranyl diphosphate = limonene + diphosphate. It catalyses the reaction (2E)-geranyl diphosphate + H2O = 1,8-cineole + diphosphate. It carries out the reaction (2E)-geranyl diphosphate = alpha-pinene + diphosphate. It functions in the pathway secondary metabolite biosynthesis; terpenoid biosynthesis. Monoterpene synthase (TPS) involved in the biosynthesis of monoterpene natural products of the 'cineole cassette', volatile compounds present in floral scent. Catalyzes the conversion of (2E)-geranyl diphosphate (GPP) into alpha-terpineol and, as minor products, sabinene, beta-myrcene, limonene, alpha-pinene and 1,8-cineole. In Nicotiana langsdorffii (Langsdorff's tobacco), this protein is Terpineol synthase, chloroplastic.